Consider the following 236-residue polypeptide: Pyridoxine 5'-phosphate synthase (236 aa).

N6 lines the 3-amino-2-oxopropyl phosphate pocket. 8–9 (DH) contacts 1-deoxy-D-xylulose 5-phosphate. R17 lines the 3-amino-2-oxopropyl phosphate pocket. H42 (proton acceptor) is an active-site residue. 1-deoxy-D-xylulose 5-phosphate contacts are provided by R44 and H49. The active-site Proton acceptor is E69. T99 serves as a coordination point for 1-deoxy-D-xylulose 5-phosphate. The Proton donor role is filled by H190. Residues G191 and 212–213 (GH) contribute to the 3-amino-2-oxopropyl phosphate site.

The protein belongs to the PNP synthase family. As to quaternary structure, homooctamer; tetramer of dimers.

The protein localises to the cytoplasm. The enzyme catalyses 3-amino-2-oxopropyl phosphate + 1-deoxy-D-xylulose 5-phosphate = pyridoxine 5'-phosphate + phosphate + 2 H2O + H(+). It functions in the pathway cofactor biosynthesis; pyridoxine 5'-phosphate biosynthesis; pyridoxine 5'-phosphate from D-erythrose 4-phosphate: step 5/5. In terms of biological role, catalyzes the complicated ring closure reaction between the two acyclic compounds 1-deoxy-D-xylulose-5-phosphate (DXP) and 3-amino-2-oxopropyl phosphate (1-amino-acetone-3-phosphate or AAP) to form pyridoxine 5'-phosphate (PNP) and inorganic phosphate. The protein is Pyridoxine 5'-phosphate synthase of Pelodictyon phaeoclathratiforme (strain DSM 5477 / BU-1).